Reading from the N-terminus, the 395-residue chain is GPI-anchor transamidase (395 aa).

The first 27 residues, 1-27, serve as a signal peptide directing secretion; that stretch reads MAVTDSLSRAATVLATVLLLSFGSVAA. At 28–368 the chain is on the lumenal side; sequence SHIEDQAEQF…PKLKDWHPPG (341 aa). D79, I82, E118, and D120 together coordinate Ca(2+). The Proton donor role is filled by H164. The active-site Nucleophile; acyl-thioester intermediate is C206. 3 residues coordinate a protein: C206, S232, and S234. The segment at 231–236 is autoinhibitory loop; it reads DSLSHQ. The cysteines at positions 275 and 280 are disulfide-linked. Residues 369 to 385 form a helical membrane-spanning segment; it reads GFILGLWALIIMVFFKT. The Cytoplasmic portion of the chain corresponds to 386 to 395; the sequence is YGIKHMKFIF.

This sequence belongs to the peptidase C13 family. In terms of assembly, heteropentamer. Part of the GPI-anchor transamidase complex, consisting of PIGK, PIGT, PIGS, PIGU and GAA1. Interacts with GPAA1. Interacts with PIGT; this interaction, via a disulfide link, stabilizes the expression of GAA1 and PIGK and links them to PIGS. In terms of processing, the disulfide bond between PIGK/GPI8 and PIGT is important for normal enzyme activity.

The protein localises to the endoplasmic reticulum membrane. It participates in glycolipid biosynthesis; glycosylphosphatidylinositol-anchor biosynthesis. Its activity is regulated as follows. In the absence of proproteins substrates, exists in an inactive state with a disrupted catalytic site by an autoinhibitory loop. The binding of proprotein substrates, particularly the CSP region, to GPI-T triggers concerted conformational changes that alleviate the inhibition by the autoinhibitory loop. Meanwhile, proprotein residues near the omega- site induce the formation of a catalytic cleft for catalysis, following which the products are released and GPI-T reverts to the inactive state. Its function is as follows. Catalytic subunit of the glycosylphosphatidylinositol-anchor (GPI-anchor) transamidase (GPI-T) complex that catalyzes the formation of the linkage between a proprotein and a GPI-anchor and participates in GPI anchored protein biosynthesis. Recognizes diverse proproteins at a C-terminal signal peptide (CSP) region that lacks consensus sequence and replaces it with a GPI-anchor via a transamidation reaction. Transamidation catalysis reaction follows a two-phase mechanism. In the acyl-enzyme phase, the carbonyl group of the proproteins's omega-site undergoes a nucleophilic attack forming an enzyme-substrate thioester bond. Followed by a general acid catalysis that allows CSP releasing, regenerating the carbonyl, and forming the acyl-enzyme intermediate. In the GPI-anchor attachment phase, the amino group of the GPI-anchor's ethanolamine phosphate, the one on third mannose (EtNP3), mediates a nucleophilic attack on the carbonyl of the acyl-enzyme intermediate, replacing the CSP, allowing GPI-anchor attachment to the omega-residue, therefore forming the product and freeing the enzyme. The chain is GPI-anchor transamidase from Homo sapiens (Human).